The following is a 475-amino-acid chain: Ribulose bisphosphate carboxylase large chain (475 aa).

Residues 1–2 constitute a propeptide that is removed on maturation; it reads MS. Pro-3 carries the post-translational modification N-acetylproline. Lys-14 carries the N6,N6,N6-trimethyllysine modification. The active-site Proton acceptor is the Lys-175. D-ribulose 1,5-bisphosphate is bound by residues Lys-175 and Lys-177. Lys-201, Asp-203, and Glu-204 together coordinate Mg(2+). Lys-201 is modified (N6-carboxylysine). Glu-204 contacts D-ribulose 1,5-bisphosphate. Catalysis depends on His-294, which acts as the Proton acceptor. D-ribulose 1,5-bisphosphate-binding residues include Arg-295, His-327, Lys-334, Ser-379, Gly-381, Gly-403, and Gly-404.

The protein belongs to the RuBisCO large chain family. Type I subfamily. Heterohexadecamer of 8 large chains and 8 small chains. Heterohexadecamer; disulfide-linked. The disulfide link is formed within the large subunit homodimers. The cofactor is Mg(2+). The disulfide bond which can form in the large chain dimeric partners within the hexadecamer appears to be associated with oxidative stress and protein turnover.

It is found in the plastid. Its subcellular location is the chloroplast. It carries out the reaction 2 (2R)-3-phosphoglycerate + 2 H(+) = D-ribulose 1,5-bisphosphate + CO2 + H2O. The catalysed reaction is D-ribulose 1,5-bisphosphate + O2 = 2-phosphoglycolate + (2R)-3-phosphoglycerate + 2 H(+). In terms of biological role, ruBisCO catalyzes two reactions: the carboxylation of D-ribulose 1,5-bisphosphate, the primary event in carbon dioxide fixation, as well as the oxidative fragmentation of the pentose substrate in the photorespiration process. Both reactions occur simultaneously and in competition at the same active site. Binds to abscisic acid (ABA); only half of the possible binding sites are occupied in the crystal and there are indications this is a low affinity site. This Pisum sativum (Garden pea) protein is Ribulose bisphosphate carboxylase large chain.